The sequence spans 209 residues: Protocatechuate 3,4-dioxygenase alpha chain (209 aa).

Arg142 is a binding site for 3,4-dihydroxybenzoate.

The protein belongs to the intradiol ring-cleavage dioxygenase family. The enzyme is an oligomer of 12 copies of the alpha and beta chains. It depends on Fe(3+) as a cofactor.

It carries out the reaction 3,4-dihydroxybenzoate + O2 = 3-carboxy-cis,cis-muconate + 2 H(+). It functions in the pathway aromatic compound metabolism; beta-ketoadipate pathway; 3-carboxy-cis,cis-muconate from 3,4-dihydroxybenzoate: step 1/1. Its function is as follows. Plays an essential role in the utilization of numerous aromatic and hydroaromatic compounds via the beta-ketoadipate pathway. This Acinetobacter baylyi (strain ATCC 33305 / BD413 / ADP1) protein is Protocatechuate 3,4-dioxygenase alpha chain (pcaG).